A 279-amino-acid polypeptide reads, in one-letter code: uncharacterized protein (279 aa).

Residues Met1–Lys77 form the HTH rpiR-type domain. Positions Ile37–Lys56 form a DNA-binding region, H-T-H motif. Residues Cys123–Ser263 form the SIS domain.

This is an uncharacterized protein from Clostridium perfringens (strain 13 / Type A).